A 314-amino-acid chain; its full sequence is tRNA pseudouridine synthase B (314 aa).

H43 is a substrate binding site. D48 (nucleophile) is an active-site residue. Substrate-binding residues include Y76, Y179, and L200.

The protein belongs to the pseudouridine synthase TruB family. Type 1 subfamily.

The enzyme catalyses uridine(55) in tRNA = pseudouridine(55) in tRNA. Responsible for synthesis of pseudouridine from uracil-55 in the psi GC loop of transfer RNAs. The polypeptide is tRNA pseudouridine synthase B (Escherichia coli O157:H7).